Here is a 295-residue protein sequence, read N- to C-terminus: Phosphatidylglycerol--prolipoprotein diacylglyceryl transferase (295 aa).

The next 7 helical transmembrane spans lie at 17 to 37 (IKVH…WLLG), 57 to 77 (LLFY…MLFY), 92 to 112 (VWDG…ACWW), 127 to 147 (FMAP…FIGA), 196 to 216 (QLYE…AVSA), 222 to 242 (YLVG…VEFV), and 255 to 275 (WLTR…VLLV). Residue R140 coordinates a 1,2-diacyl-sn-glycero-3-phospho-(1'-sn-glycerol).

It belongs to the Lgt family.

It is found in the cell inner membrane. The enzyme catalyses L-cysteinyl-[prolipoprotein] + a 1,2-diacyl-sn-glycero-3-phospho-(1'-sn-glycerol) = an S-1,2-diacyl-sn-glyceryl-L-cysteinyl-[prolipoprotein] + sn-glycerol 1-phosphate + H(+). The protein operates within protein modification; lipoprotein biosynthesis (diacylglyceryl transfer). Its function is as follows. Catalyzes the transfer of the diacylglyceryl group from phosphatidylglycerol to the sulfhydryl group of the N-terminal cysteine of a prolipoprotein, the first step in the formation of mature lipoproteins. In Stenotrophomonas maltophilia (strain R551-3), this protein is Phosphatidylglycerol--prolipoprotein diacylglyceryl transferase.